Here is a 38-residue protein sequence, read N- to C-terminus: Potassium channel toxin alpha-KTx 3.17 (38 aa).

Intrachain disulfides connect C8–C28, C14–C33, and C18–C35.

The protein belongs to the short scorpion toxin superfamily. Potassium channel inhibitor family. Alpha-KTx 03 subfamily. In terms of tissue distribution, expressed by the venom gland.

Its subcellular location is the secreted. Its function is as follows. Completely inhibits the (125)I-kaliotoxin binding on rat brain synaptosomes with high-affinity (IC(50)=0.1 nM). Is a potent Kv1.3/KCNA3 ligand. This chain is Potassium channel toxin alpha-KTx 3.17, found in Buthus paris (Scorpion).